A 419-amino-acid polypeptide reads, in one-letter code: UDP-N-acetylglucosamine 1-carboxyvinyltransferase (419 aa).

22–23 (KN) lines the phosphoenolpyruvate pocket. A UDP-N-acetyl-alpha-D-glucosamine-binding site is contributed by Arg-93. Residue Cys-117 is the Proton donor of the active site. Cys-117 carries the post-translational modification 2-(S-cysteinyl)pyruvic acid O-phosphothioketal. UDP-N-acetyl-alpha-D-glucosamine contacts are provided by Asp-307 and Ile-329.

It belongs to the EPSP synthase family. MurA subfamily.

The protein localises to the cytoplasm. It catalyses the reaction phosphoenolpyruvate + UDP-N-acetyl-alpha-D-glucosamine = UDP-N-acetyl-3-O-(1-carboxyvinyl)-alpha-D-glucosamine + phosphate. It functions in the pathway cell wall biogenesis; peptidoglycan biosynthesis. Functionally, cell wall formation. Adds enolpyruvyl to UDP-N-acetylglucosamine. The protein is UDP-N-acetylglucosamine 1-carboxyvinyltransferase of Shewanella baltica (strain OS195).